The chain runs to 252 residues: 3-dehydroquinate dehydratase (252 aa).

3-dehydroquinate-binding positions include S21, 46–48 (EWR), and R82. The active-site Proton donor/acceptor is H143. K170 (schiff-base intermediate with substrate) is an active-site residue. 3-dehydroquinate contacts are provided by R213, S232, and Q236.

The protein belongs to the type-I 3-dehydroquinase family. As to quaternary structure, homodimer.

The enzyme catalyses 3-dehydroquinate = 3-dehydroshikimate + H2O. Its pathway is metabolic intermediate biosynthesis; chorismate biosynthesis; chorismate from D-erythrose 4-phosphate and phosphoenolpyruvate: step 3/7. In terms of biological role, involved in the third step of the chorismate pathway, which leads to the biosynthesis of aromatic amino acids. Catalyzes the cis-dehydration of 3-dehydroquinate (DHQ) and introduces the first double bond of the aromatic ring to yield 3-dehydroshikimate. The protein is 3-dehydroquinate dehydratase of Escherichia coli O139:H28 (strain E24377A / ETEC).